The primary structure comprises 414 residues: Cell division protein FtsA (414 aa).

It belongs to the FtsA/MreB family. As to quaternary structure, self-interacts. Interacts with FtsZ.

It is found in the cell inner membrane. In terms of biological role, cell division protein that is involved in the assembly of the Z ring. May serve as a membrane anchor for the Z ring. The chain is Cell division protein FtsA from Neisseria meningitidis serogroup B (strain ATCC BAA-335 / MC58).